The sequence spans 204 residues: Guanylate kinase (204 aa).

Positions 5–184 (GLLLVLSGPS…AVDHIKSIVE (180 aa)) constitute a Guanylate kinase-like domain. An ATP-binding site is contributed by 12–19 (GPSGVGKG).

This sequence belongs to the guanylate kinase family.

It is found in the cytoplasm. The catalysed reaction is GMP + ATP = GDP + ADP. Its function is as follows. Essential for recycling GMP and indirectly, cGMP. This chain is Guanylate kinase, found in Lactobacillus johnsonii (strain CNCM I-12250 / La1 / NCC 533).